Reading from the N-terminus, the 203-residue chain is Small ribosomal subunit protein uS4 (203 aa).

The S4 RNA-binding domain maps to Cys93 to Asn154.

Belongs to the universal ribosomal protein uS4 family. Part of the 30S ribosomal subunit. Contacts protein S5. The interaction surface between S4 and S5 is involved in control of translational fidelity.

Its function is as follows. One of the primary rRNA binding proteins, it binds directly to 16S rRNA where it nucleates assembly of the body of the 30S subunit. Functionally, with S5 and S12 plays an important role in translational accuracy. This chain is Small ribosomal subunit protein uS4, found in Chloroherpeton thalassium (strain ATCC 35110 / GB-78).